A 300-amino-acid chain; its full sequence is U6 snRNA methylphosphate capping enzyme Amus (300 aa).

Residues 1 to 12 (MDLENNNNTPLT) show a composition bias toward polar residues. Disordered stretches follow at residues 1–21 (MDLENNNNTPLTGKQAEKCAK) and 34–68 (VESKRLKKEESNVEATSRPPAQSPKKRLHLNGKPM). Residues 34–44 (VESKRLKKEES) show a composition bias toward basic and acidic residues. Residues 95-300 (DIRLDVLGTQ…KRPIQIFTKS (206 aa)) enclose the Bin3-type SAM domain. Positions 119 and 140 each coordinate S-adenosyl-L-methionine.

It belongs to the methyltransferase superfamily.

It localises to the nucleus. Probable S-adenosyl-L-methionine-dependent methyltransferase that binds and stabilizes U6 snRNA, probably by adding a methylphosphate cap at its 5'-end. Required for U6 stability, but not stability of 7SK snRNAs, other miRNAs or tRNAs. U6 stabilization is required for efficient pre-mRNA splicing. Essential for organismal and germline development. The polypeptide is U6 snRNA methylphosphate capping enzyme Amus (Drosophila melanogaster (Fruit fly)).